Here is a 248-residue protein sequence, read N- to C-terminus: Tetraspanin-16 (248 aa).

The Cytoplasmic portion of the chain corresponds to M1 to G7. Residues F8–L28 traverse the membrane as a helical segment. Over Y29–S44 the chain is Extracellular. Residues F45–C65 traverse the membrane as a helical segment. Residues H66 to R69 are Cytoplasmic-facing. The chain crosses the membrane as a helical span at residues M70 to L90. Residues K91–Q208 are Extracellular-facing. 2 N-linked (GlcNAc...) asparagine glycosylation sites follow: N96 and N141. Residues W209–I229 form a helical membrane-spanning segment. Topologically, residues S230–S248 are cytoplasmic.

This sequence belongs to the tetraspanin (TM4SF) family.

It is found in the membrane. Its function is as follows. May be involved in the regulation of cell differentiation. The polypeptide is Tetraspanin-16 (TET16) (Arabidopsis thaliana (Mouse-ear cress)).